The primary structure comprises 342 residues: Muscleblind-like protein 3 (342 aa).

C3H1-type zinc fingers lie at residues 14-42 (WLTL…HPPR), 48-74 (NGRV…HPPP), 174-202 (TDRL…HPTD), and 210-236 (DNSV…HPPP). Positions 316-326 (PSTVSTATPPA) are enriched in low complexity. The disordered stretch occupies residues 316 to 342 (PSTVSTATPPASNVPYVPTTTGNQLKY). The segment covering 333–342 (PTTTGNQLKY) has biased composition (polar residues).

The protein belongs to the muscleblind family.

Its subcellular location is the nucleus. The protein localises to the cytoplasm. Mediates pre-mRNA alternative splicing regulation. Acts either as activator or repressor of splicing on specific pre-mRNA targets. Inhibits cardiac troponin-T (TNNT2) pre-mRNA exon inclusion but induces insulin receptor (IR) pre-mRNA exon inclusion in muscle. Antagonizes the alternative splicing activity pattern of CELF proteins. Could inhibit terminal muscle differentiation, acting at approximately the time of myogenin induction. The chain is Muscleblind-like protein 3 (Mbnl3) from Mus musculus (Mouse).